The primary structure comprises 401 residues: Membrane protein UL43 homolog (401 aa).

10 helical membrane passes run 43-63 (FVGI…IDLL), 67-87 (STCL…RVPI), 93-113 (IVTV…SVWV), 124-144 (LIVV…ISLF), 159-179 (ASLL…LVEL), 182-202 (VPIG…FGLA), 259-279 (PGVI…WIVL), 294-314 (YVVF…QLVI), 332-352 (AVCM…SLAF), and 379-399 (ISRW…ATII).

This sequence belongs to the alphaherpesvirinae HHV-1 UL43 family.

It localises to the membrane. The chain is Membrane protein UL43 homolog from Equine herpesvirus 1 (strain Ab4p) (EHV-1).